Reading from the N-terminus, the 371-residue chain is Cytochrome b (371 aa).

4 helical membrane-spanning segments follow: residues 25-45, 69-90, 105-125, and 170-190; these read FGSMLLACSSMQVLTGFFLAV, WMMQNLHAIGASMFFICIYTHI, WLSGTTLLIMLMATAFFGYVL, and FFALHFILPFGIISLSSLHIM. Residues His-75 and His-89 each contribute to the heme b site. Heme b contacts are provided by His-174 and His-188. An a ubiquinone-binding site is contributed by His-193. The next 4 membrane-spanning stretches (helical) occupy residues 218–238, 280–300, 312–332, and 339–358; these read YKDMLMLSLMILALLMTVAFF, LGGALALVMSIMILLTAPFTH, IMQLMFWTLVATFAVITWAAT, and FTTISQVASTMYFMFFITNP.

Belongs to the cytochrome b family. The cytochrome bc1 complex contains 3 respiratory subunits (MT-CYB, CYC1 and UQCRFS1), 2 core proteins (UQCRC1 and UQCRC2) and probably 6 low-molecular weight proteins. Heme b is required as a cofactor.

It localises to the mitochondrion inner membrane. Its function is as follows. Component of the ubiquinol-cytochrome c reductase complex (complex III or cytochrome b-c1 complex) that is part of the mitochondrial respiratory chain. The b-c1 complex mediates electron transfer from ubiquinol to cytochrome c. Contributes to the generation of a proton gradient across the mitochondrial membrane that is then used for ATP synthesis. The polypeptide is Cytochrome b (MT-CYB) (Eryx colubrinus colubrinus).